A 356-amino-acid chain; its full sequence is Peptide chain release factor 1 (356 aa).

N5-methylglutamine is present on Gln-234.

Belongs to the prokaryotic/mitochondrial release factor family. In terms of processing, methylated by PrmC. Methylation increases the termination efficiency of RF1.

The protein localises to the cytoplasm. In terms of biological role, peptide chain release factor 1 directs the termination of translation in response to the peptide chain termination codons UAG and UAA. This chain is Peptide chain release factor 1, found in Exiguobacterium sp. (strain ATCC BAA-1283 / AT1b).